A 691-amino-acid chain; its full sequence is Elongation factor G (691 aa).

Positions 8 to 282 (HMVRNIGIAA…AVVDYLPAPD (275 aa)) constitute a tr-type G domain. Residues 17 to 24 (AHIDAGKT), 81 to 85 (DTPGH), and 135 to 138 (NKMD) contribute to the GTP site.

This sequence belongs to the TRAFAC class translation factor GTPase superfamily. Classic translation factor GTPase family. EF-G/EF-2 subfamily.

Its subcellular location is the cytoplasm. Its function is as follows. Catalyzes the GTP-dependent ribosomal translocation step during translation elongation. During this step, the ribosome changes from the pre-translocational (PRE) to the post-translocational (POST) state as the newly formed A-site-bound peptidyl-tRNA and P-site-bound deacylated tRNA move to the P and E sites, respectively. Catalyzes the coordinated movement of the two tRNA molecules, the mRNA and conformational changes in the ribosome. The protein is Elongation factor G of Campylobacter hominis (strain ATCC BAA-381 / DSM 21671 / CCUG 45161 / LMG 19568 / NCTC 13146 / CH001A).